Reading from the N-terminus, the 674-residue chain is Inorganic pyrophosphatase TTM2 (674 aa).

The CYTH domain maps to 248-410 (SPTYILKSRK…PRTYIEQIQL (163 aa)). Disordered regions lie at residues 457–498 (KNLK…SPAN) and 619–640 (RSRLARTGSSNSGNRGRSSKSS). The segment covering 484–496 (SDRRYEERNHDSP) has biased composition (basic and acidic residues). A compositionally biased stretch (low complexity) spans 623–640 (ARTGSSNSGNRGRSSKSS). Residues 650–670 (LPLVLTVAICSIGIIVIKSYI) form a helical membrane-spanning segment.

Requires Mg(2+) as cofactor. In terms of tissue distribution, predominantly expressed in the shoot apices of inflorescences.

It localises to the mitochondrion outer membrane. It catalyses the reaction diphosphate + H2O = 2 phosphate + H(+). Its function is as follows. Exhibits pyrophosphatase activity with stronger affinity for pyrophosphate (PPi), moderate affinity for ATP and ADP, and weak affinity for tripolyphosphate (PPPi). No activity observed toward uridine substrate. Negative regulator of the salicylic acid (SA)-mediated amplification of defense responses against both virulent and avirulent pathogens, including oomycetes (e.g. H.arabidopsidis) and bacteria (e.g. P.syringae). Represses systemic acquired resistance (SAR). This Arabidopsis thaliana (Mouse-ear cress) protein is Inorganic pyrophosphatase TTM2.